Reading from the N-terminus, the 228-residue chain is MRITIILVAPARAENIGAAARAMKTMGFSDLRIVDSQAHLEPATRWVAHGSGDIIDNIKVFPTLAESLHDVDFTVATTARSRAKYHYYATPVELVPLLEEKSSWMSHAALVFGREDSGLTNEELALADVLTGVPMVADYPSLNLGQAVMVYCYQLATLIQQPAKSDATADQHQLQALRERAMTLLTTLAVADDIKLVDWLQQRLGLLEQRDTAMLHRLLHDIEKNITK.

S-adenosyl-L-methionine-binding positions include Thr-77–Ala-79, Gly-113, Val-133, and Pro-140–Leu-142.

The protein belongs to the class IV-like SAM-binding methyltransferase superfamily. RNA methyltransferase TrmH family.

This is an uncharacterized protein from Escherichia coli (strain K12).